Here is a 598-residue protein sequence, read N- to C-terminus: Glutamine--fructose-6-phosphate aminotransferase [isomerizing] (598 aa).

C2 (nucleophile; for GATase activity) is an active-site residue. Residues 2–219 form the Glutamine amidotransferase type-2 domain; that stretch reads CGIIGYIGPR…DGEYGIVSKD (218 aa). SIS domains are found at residues 280–420 and 449–588; these read VAEL…LVGI and IAVK…PDRP. Residue K593 is the For Fru-6P isomerization activity of the active site.

As to quaternary structure, homodimer.

It is found in the cytoplasm. It catalyses the reaction D-fructose 6-phosphate + L-glutamine = D-glucosamine 6-phosphate + L-glutamate. In terms of biological role, catalyzes the first step in hexosamine metabolism, converting fructose-6P into glucosamine-6P using glutamine as a nitrogen source. This chain is Glutamine--fructose-6-phosphate aminotransferase [isomerizing], found in Pyrococcus horikoshii (strain ATCC 700860 / DSM 12428 / JCM 9974 / NBRC 100139 / OT-3).